The sequence spans 404 residues: Probable glucan endo-1,6-beta-glucosidase B (404 aa).

The signal sequence occupies residues Met1–Ala20. N-linked (GlcNAc...) asparagine glycans are attached at residues Asn33 and Asn130. Glu222 acts as the Proton donor in catalysis. Asn253 and Asn299 each carry an N-linked (GlcNAc...) asparagine glycan. Glu324 serves as the catalytic Nucleophile.

Belongs to the glycosyl hydrolase 5 (cellulase A) family.

Its subcellular location is the secreted. The enzyme catalyses Random hydrolysis of (1-&gt;6)-linkages in (1-&gt;6)-beta-D-glucans.. In terms of biological role, beta-glucanases participate in the metabolism of beta-glucan, the main structural component of the cell wall. Acts on lutean, pustulan and 1,6-oligo-beta-D-glucosides. The polypeptide is Probable glucan endo-1,6-beta-glucosidase B (exgB) (Aspergillus terreus (strain NIH 2624 / FGSC A1156)).